The primary structure comprises 146 residues: Phosphoribosyl-AMP cyclohydrolase (146 aa).

D95 lines the Mg(2+) pocket. C96 lines the Zn(2+) pocket. Mg(2+) contacts are provided by D97 and D99. Zn(2+) is bound by residues C112 and C119.

The protein belongs to the PRA-CH family. Homodimer. It depends on Mg(2+) as a cofactor. Zn(2+) is required as a cofactor.

It is found in the cytoplasm. The enzyme catalyses 1-(5-phospho-beta-D-ribosyl)-5'-AMP + H2O = 1-(5-phospho-beta-D-ribosyl)-5-[(5-phospho-beta-D-ribosylamino)methylideneamino]imidazole-4-carboxamide. It participates in amino-acid biosynthesis; L-histidine biosynthesis; L-histidine from 5-phospho-alpha-D-ribose 1-diphosphate: step 3/9. Catalyzes the hydrolysis of the adenine ring of phosphoribosyl-AMP. The protein is Phosphoribosyl-AMP cyclohydrolase of Chromohalobacter salexigens (strain ATCC BAA-138 / DSM 3043 / CIP 106854 / NCIMB 13768 / 1H11).